Reading from the N-terminus, the 285-residue chain is Bifunctional protein FolD (285 aa).

Residues glycine 165–serine 167 and serine 190 contribute to the NADP(+) site.

Belongs to the tetrahydrofolate dehydrogenase/cyclohydrolase family. As to quaternary structure, homodimer.

The catalysed reaction is (6R)-5,10-methylene-5,6,7,8-tetrahydrofolate + NADP(+) = (6R)-5,10-methenyltetrahydrofolate + NADPH. It carries out the reaction (6R)-5,10-methenyltetrahydrofolate + H2O = (6R)-10-formyltetrahydrofolate + H(+). It functions in the pathway one-carbon metabolism; tetrahydrofolate interconversion. In terms of biological role, catalyzes the oxidation of 5,10-methylenetetrahydrofolate to 5,10-methenyltetrahydrofolate and then the hydrolysis of 5,10-methenyltetrahydrofolate to 10-formyltetrahydrofolate. The chain is Bifunctional protein FolD from Streptococcus pneumoniae serotype 4 (strain ATCC BAA-334 / TIGR4).